We begin with the raw amino-acid sequence, 616 residues long: uncharacterized protein (616 aa).

It belongs to the UbiD family.

This is an uncharacterized protein from Helicobacter pylori (strain ATCC 700392 / 26695) (Campylobacter pylori).